Consider the following 90-residue polypeptide: Probable Fe(2+)-trafficking protein (90 aa).

It belongs to the Fe(2+)-trafficking protein family.

In terms of biological role, could be a mediator in iron transactions between iron acquisition and iron-requiring processes, such as synthesis and/or repair of Fe-S clusters in biosynthetic enzymes. The chain is Probable Fe(2+)-trafficking protein from Coxiella burnetii (strain CbuG_Q212) (Coxiella burnetii (strain Q212)).